A 250-amino-acid chain; its full sequence is Prophage antitermination protein Q homolog QuuQ (250 aa).

This sequence belongs to the phage antitermination Q type 2 family.

Its function is as follows. Positively regulate expression of some phage genes. Bacterial host RNA polymerase modified by antitermination proteins transcribes through termination sites that otherwise prevent expression of the regulated genes. The chain is Prophage antitermination protein Q homolog QuuQ (quuQ) from Escherichia coli (strain K12).